The following is a 273-amino-acid chain: MTRLASRFGAANLIRRDRPLTREELFRVVPSVFSEDKHESRSERYTYIPTISLLDSLQREGFQPFFACQTRVRDPGRREHTKHMLRLRREGQITGKQVPEIILLNSHDGTSSYQMLPGLFRAVCQNGLVCGESFGEVRVPHKGDVVSQVIEGAYEVLGIFDRVEEKRDAMQSLLLPPPAQQALAKAALTYRFGEDHQPVTESQILSPRRWQDESNDLWTTYQRIQENLIKGGLSGRNAKGGRSHTRAVRGIDGDVKLNRALWVMAEALLTQLQ.

This sequence belongs to the UPF0380 family.

This is UPF0380 protein YafZ (yafZ) from Escherichia coli (strain K12).